A 184-amino-acid polypeptide reads, in one-letter code: Endoribonuclease YbeY (184 aa).

His-146, His-150, and His-156 together coordinate Zn(2+).

It belongs to the endoribonuclease YbeY family. It depends on Zn(2+) as a cofactor.

The protein resides in the cytoplasm. Its function is as follows. Single strand-specific metallo-endoribonuclease involved in late-stage 70S ribosome quality control and in maturation of the 3' terminus of the 16S rRNA. The protein is Endoribonuclease YbeY of Nostoc sp. (strain PCC 7120 / SAG 25.82 / UTEX 2576).